We begin with the raw amino-acid sequence, 184 residues long: C-phycoerythrin beta chain (184 aa).

Residues cysteine 48 and cysteine 59 each contribute to the (2R,3E)-phycoerythrobilin site. Asparagine 70 bears the N4-methylasparagine mark. Positions 80 and 165 each coordinate (2R,3E)-phycoerythrobilin.

It belongs to the phycobiliprotein family. In terms of assembly, heterodimer of an alpha and a beta chain. In terms of processing, contains three covalently linked bilin chromophores.

The protein localises to the cellular thylakoid membrane. Functionally, light-harvesting photosynthetic bile pigment-protein from the phycobiliprotein complex. The protein is C-phycoerythrin beta chain (cpeB) of Microchaete diplosiphon (Fremyella diplosiphon).